Here is a 147-residue protein sequence, read N- to C-terminus: Protein MGF 100-3L (147 aa).

This sequence belongs to the asfivirus MGF 100 family.

Its function is as follows. Plays a role in virus cell tropism, and may be required for efficient virus replication in macrophages. This African swine fever virus (isolate Tick/Malawi/Lil 20-1/1983) (ASFV) protein is Protein MGF 100-3L.